The following is a 497-amino-acid chain: Signal recognition particle subunit SRP54 2 (497 aa).

The segment at 1 to 297 (MVLAELGGRI…DAKPFVSRLL (297 aa)) is G-domain. GTP is bound by residues 108-117 (GLQGEVLEKP), 192-196 (DTSGR), and 250-253 (TKMD). Positions 298–497 (GNGDMSGFVN…LMGMFGGRDE (200 aa)) are M-domain.

It belongs to the GTP-binding SRP family. SRP54 subfamily. In terms of assembly, component of a signal recognition particle (SRP) complex that consists of a 7SL RNA molecule of 300 nucleotides and six protein subunits: SRP72, SRP68, SRP54, SRP19, SRP14 and SRP9.

The protein localises to the cytoplasm. It localises to the endoplasmic reticulum. It catalyses the reaction GTP + H2O = GDP + phosphate + H(+). Component of the signal recognition particle (SRP) complex, a ribonucleoprotein complex that mediates the cotranslational targeting of secretory and membrane proteins to the endoplasmic reticulum (ER). As part of the SRP complex, associates with the SRP receptor (SR) component SRPRA to target secretory proteins to the endoplasmic reticulum membrane. Binds to the signal sequence of presecretory proteins when they emerge from the ribosomes. Displays basal GTPase activity, and stimulates reciprocal GTPase activation of the SR subunit SRPRA. Forms a guanosine 5'-triphosphate (GTP)-dependent complex with the SR subunit SRPRA. SR compaction and GTPase mediated rearrangement of SR drive SRP-mediated cotranslational protein translocation into the ER. Requires the presence of SRP9/SRP14 and/or SRP19 to stably interact with RNA. The chain is Signal recognition particle subunit SRP54 2 (SRP-54B) from Arabidopsis thaliana (Mouse-ear cress).